A 556-amino-acid polypeptide reads, in one-letter code: Formate--tetrahydrofolate ligase (556 aa).

65–72 is a binding site for ATP; that stretch reads TPAGEGKS.

Belongs to the formate--tetrahydrofolate ligase family.

It catalyses the reaction (6S)-5,6,7,8-tetrahydrofolate + formate + ATP = (6R)-10-formyltetrahydrofolate + ADP + phosphate. The protein operates within one-carbon metabolism; tetrahydrofolate interconversion. This chain is Formate--tetrahydrofolate ligase, found in Streptococcus thermophilus (strain CNRZ 1066).